The sequence spans 126 residues: Glycine cleavage system H protein (126 aa).

One can recognise a Lipoyl-binding domain in the interval 22-104; that stretch reads VAYVGITDYA…YGEGWLIKMK (83 aa). Lysine 63 is subject to N6-lipoyllysine.

It belongs to the GcvH family. In terms of assembly, the glycine cleavage system is composed of four proteins: P, T, L and H. The cofactor is (R)-lipoate.

The glycine cleavage system catalyzes the degradation of glycine. The H protein shuttles the methylamine group of glycine from the P protein to the T protein. This Bacteroides fragilis (strain ATCC 25285 / DSM 2151 / CCUG 4856 / JCM 11019 / LMG 10263 / NCTC 9343 / Onslow / VPI 2553 / EN-2) protein is Glycine cleavage system H protein.